A 247-amino-acid chain; its full sequence is Homeobox-leucine zipper protein HOX17 (247 aa).

The disordered stretch occupies residues 58–81 (ERAGLRGGGGSDEEDGGCGIDGSR). A DNA-binding region (homeobox) is located at residues 79-138 (GSRKKLRLSKDQSAVLEDSFREHPTLNPRQKATLAQQLGLRPRQVEVWFQNRRARTKLKQ). A leucine-zipper region spans residues 137–182 (KQTEVDCEFLKRCCETLTEENRRLQKEVQELRALKLVSPHLYMNMS).

Belongs to the HD-ZIP homeobox family. Class II subfamily. In terms of tissue distribution, expressed in seedlings, roots, stems, leaf sheaths and blades and panicles.

Its subcellular location is the nucleus. In terms of biological role, probable transcription factor. The chain is Homeobox-leucine zipper protein HOX17 (HOX17) from Oryza sativa subsp. indica (Rice).